We begin with the raw amino-acid sequence, 156 residues long: Small ribosomal subunit protein uS7cz/uS7cy (156 aa).

The protein belongs to the universal ribosomal protein uS7 family. Part of the 30S ribosomal subunit.

The protein resides in the plastid. It is found in the chloroplast. One of the primary rRNA binding proteins, it binds directly to 16S rRNA where it nucleates assembly of the head domain of the 30S subunit. This chain is Small ribosomal subunit protein uS7cz/uS7cy (rps7-A), found in Triticum aestivum (Wheat).